The sequence spans 2260 residues: MDAFIDSEEVPMSSSSPNRVEPIAIVGFGFKFPQDITNAESFWKLLIERRSTMTEIPKNRWNIDGFYKEHGHRPGTVKNRGGHFLADDPARFDAPFFSIQPAEAECMDPQQRLLLETSYHALENAGIPMQAAMGTRTSVHVGCLLQEYSQISQRDAQMPGDYRIVGSSGLAMLANRLSWFYDFSGPSMTVDTACSGGLVAFHLACQELSAGSVDMSLVCGNNLCLLPDSTALLSSLNMMSKDSVCYSFDERASGYARGEGFGVLILKRLATAIADGDTIRGVVRSTGCGQDGNTPSITSPSQSAQERLIRETYARAGLDLGHTRYFEAHGTGTPVGDPCEAAAISNVFSCRTPKDPIFVGALKSNMGHPEGASGIAGVIKTLLVLEKGIIPPNVYPERINPAVAAAGPNLKFPLVPATWPTDGIRRASVNSFGYGGTNAHVVLDDALSFLRDHGLSGRHCTEILHASEGATKPAIFDALAINGEDGSYSTDTSACSEFFADNTPPDSMDDHETAPKLFILSAFDERATQRSISTFENWMRNHANDENDRQLLNDVAYTLAEKRTSFPWKSVCVALPNSLSQLSWSAPARARQRVNLCFVFTGQGAQWHGMGRELMIYPPFRDAMLRADRYFKSLGSAWSLIDELYLTSKEDSVIHQPELSQPICTALQMAIHDLLTSWRVCASISVGHSSGEIAAAYASRAISQESAWMIAYFRGLAVAIAQALNPSPGAMIAVQAPLKLGNTSWTSRMQNIRPISSLSACYNSPTSFTLSGSHSMLHQLAITLKQANIEVHILKIDVAYHSHYMKPVAGVYEKLLRTIEPGEQVEAQPSFVSTVTGKNVQQLNALRTSEYWQQNLCGSVKFSATLQSICARQDASTLFFVEIGPHSVLRSPLGDILKESGRDVAIDYSSVLRRDRAADITALECAGKLHTIGASIDITEVNKESEKSPRFLPSLPSYQFEDKKKYWLEGRTSIQYRQTQFVHHELLGSRTPDWNEHEARWTNRILLDQSPYLHDHQINGLCLMPAAGMLTMAIEATRQYYGHRAENASGYKLKDVTFTKAMTLSADARGTEIQLTLRPAAAESRDVQPGSLWNQFSLFVHEDGGWHLCCKGYVAIEYDDRRESSGELAESATAMEEKKQAFLAASQECRIAIDSADIYGAFGQAGLTYGPTFKGMRNVKWDQRNQATGTIGLRDWQRHAKFSYSDPHFIHPAALDTILQTTFPAYSIYAKDSSATTVPTGFSNAWFSVKLMRDPSDPQDVVVHAKVAGRGFRNKLFSITAAFANTQELCFYGDLETSTIGRNSPSADNTEVPRSLYRIDWQPAEFHRPTAVSPPSALSKSCIHIIYDDSEPLQSELMQALRRTMSAQDDVGVALVTWSSVSQHELDNATCVFLPGLDGNLLRRMQEDGLANIKSLLLKASTLIWITFQHQTIDQSPTEGLVSGLVRTLATESEDYRLVSVSLNPETGLDTVATNITKVATALLEPQDDPEDEYCEIDGRLCTPRVVDDAELTVQALSTKDTAVSITKPWSELDSPKLTIGAAGILKTLHYEQTSIQMDELASDDVVIQVKAVGLNTRDALVALGQVHDESFGSEIAGVVVNTGSSHDAGFQIGDRVFGVTRGGVAQLARCKASQLQRVPDRMSFCEAAAYPVAFCTAYYVLTQYCGTNSGDSILVHDAASVLGQAIIKIAAIHGYTKIFATVSSAGGAHFLENSLHVPKSNIFSTDSLDFQHGIRHLTNGEGVAVVVGSEDHLQDSWPCIAPFGRFVGVGEKDVFHSTANGSKEIVLPPTTKNIAFVSVSFQDLAESYMFKDIFKHALMLIEDAQVTMALPPTVFKQSEIEPALRRLTDVDVVEKIVIEMDSDEVVEMEPAQNSTKPLFRPDASYLIAGAFGGIGQSIARWMVQHGAKLLILPSRSPVEGTGSERDHFVQELKAQGAEVYAPVCDIADHDQLRKMLVSFSHLPAVKGCIQAAMVMRDSSFAKMTIEQWHQSLAPKVDGSWNLHRLLPLGLDFFVMLSSSTGIMGSFGQSNYTVGNTYQDTLAAHRMRHGQRAHALALSMVTGVGYVAQNDQVQALLRVRGMLEEVPMEDIYNLLRFCCDPDRVDASTVGSQIITPLTLPADLRAMGIVAPLGSTRPIYHYLDTLPSRLSSDTASAEAKNRPSYKLSEATSLVQATDIVVEAIQTQLSSLLVVSKDDIDSQRAIYRYGVDSLVAVEMRNWFSKAIGADVGTADIMSDISIWLLAVKVAGKSKFVRNELKE.

In terms of domain architecture, Ketosynthase family 3 (KS3) spans 20–445 (VEPIAIVGFG…GTNAHVVLDD (426 aa)). Residues Cys-194, His-329, and His-368 each act as for beta-ketoacyl synthase activity in the active site. The interval 598–933 (FVFTGQGAQW…ECAGKLHTIG (336 aa)) is malonyl-CoA:ACP transacylase (MAT) domain. Ser-689 acts as the For malonyltransferase activity in catalysis. The tract at residues 984–1121 (HELLGSRTPD…GYVAIEYDDR (138 aa)) is N-terminal hotdog fold. Positions 984 to 1281 (HELLGSRTPD…FRNKLFSITA (298 aa)) are dehydratase (DH) domain. Residues 984-1306 (HELLGSRTPD…TSTIGRNSPS (323 aa)) enclose the PKS/mFAS DH domain. His-1016 acts as the Proton acceptor; for dehydratase activity in catalysis. A C-terminal hotdog fold region spans residues 1150–1306 (RIAIDSADIY…TSTIGRNSPS (157 aa)). Asp-1216 acts as the Proton donor; for dehydratase activity in catalysis. Residues 1544–1859 (GILKTLHYEQ…DVDVVEKIVI (316 aa)) are enoylreductase (ER) domain. The segment at 1882 to 2104 (PDASYLIAGA…LRFCCDPDRV (223 aa)) is ketoreductase (KR) domain. The 78-residue stretch at 2174–2251 (QATDIVVEAI…LLAVKVAGKS (78 aa)) folds into the Carrier domain. The residue at position 2211 (Ser-2211) is an O-(pantetheine 4'-phosphoryl)serine.

It depends on pantetheine 4'-phosphate as a cofactor.

In terms of biological role, reducing polyketide synthase that catalyzes the formation of a C22 intermediate attached to the ACP. Release by intramolecular hydrolysis by the enolized delta-carbonyl would give the pyrone product aslanipyrone. Alternatively, KR-mediated reduction of the beta-carbonyl of the C22 intermediate would form a beta-hydroxy thioester intermediate, which could be a substrate for a further KS-mediated condensation of an additional C2 unit to form a C24 intermediate, which cyclizes by aldol condensation followed by decarboxylation to form aslaniol. Neither aslanipyrone, aslaniol, nor their derivatives have been detected in A.solani, probably due to a low abundance and/or extensive post-PKS modification. It is assumed that the branching point from C22 to C24 is the result of KR activity on the C22 intermediate anchored to the ACP. The chain is Reducing polyketide synthase pksF from Alternaria solani.